Reading from the N-terminus, the 930-residue chain is MTAATVRGGTPRDSVVSVSNRWEGAGVNKGYAVYCDADPYFYDAPHRTADRTGAARSRYAAASSPVPEGWQRHESGDWLALRPADADLPAQGWKIHVSACLDNAESVLDRVWRHCVDGGTAFKFVPSRYLLHQRNAKYADRAGSGKFVTVYPADEAEFERLVGELSELLAGEPGPHILSDLRIGDGPVHVRYGGFTRRDCYDADGELRPAVSGPDGVLVPDLRGPVFRIPEWVDPPAFLRPHLDARSAVTVTGMPYTVESALHFSNGGGVYLARDTRTGARVVLKEARPHAGLAADGADAVTRLHRERRALERLSGLACTPEVLDHRTVGEHHFLVLEHIDGKPLNTFFARRHPLIEADPGERRLAEYTDWALDVHARVERAVAEVHARGVVFNDLHLFNIMVRDDDSVALLDFEAAHHVDEAGRQIVANPGFVAPPDRRGVAVDRYALACLRIVLFLPLTSLLAVDRHKAAHLAEVVAEQFPVDRAFLDAAVEEITRVDGSTRVDGSTRADETTRADETTRLDVTTRVHGAPDAARRPAGPVAPVRPDDWPRSRDSMAAAIRASATPSRTDRLFPGDIAQFATAGGGLAFAHGAAGVLYALAESGAGRDEDGEQWLLERTKRPPSGMPLGFHDGLAGLAWTLERLGHRDRALDLAELLLDQPLDHLGPDLHGGTAGLGLALESLAATTGQAALHSAALHCAELAADGLPGGSVPADRVSRGRARAGLLYGGAGRALLFLRLFERTRDSALLDLARDALRQDLARCVRGAGGALQVDEGWRTMPYLGAGSVGIGMVLDDYLAHRADEEFARAANEIVAAAQAMFYAQPGLYRGVAGMVLHLGRTTATAPGTGPRAVRRQLDALSWHAMSYRDRLAFPGEQMMRLSMDLSTGTAGCLLAVASVLGDAPAGLPFLPPPRRSGGPLTRPHQEP.

Residues 256 to 516 form the Protein kinase domain; sequence YTVESALHFS…GSTRADETTR (261 aa). Residues 262 to 270 and lysine 285 each bind ATP; that span reads LHFSNGGGV. The Proton acceptor role is filled by aspartate 395. A helical membrane pass occupies residues 447–467; sequence YALACLRIVLFLPLTSLLAVD. The segment covering 501–527 has biased composition (basic and acidic residues); it reads GSTRVDGSTRADETTRADETTRLDVTT. 2 disordered regions span residues 501–558 and 911–930; these read GSTR…RDSM and PFLP…HQEP. Positions 532 to 546 are enriched in low complexity; that stretch reads APDAARRPAGPVAPV. Basic and acidic residues predominate over residues 547–556; sequence RPDDWPRSRD.

The protein in the N-terminal section; belongs to the protein kinase superfamily.

The protein resides in the cell membrane. Its function is as follows. Required for aerial hyphae formation. Probably involved in processing the precursor of SapB to its mature form. The chain is Probable SapB synthase from Streptomyces coelicolor (strain ATCC BAA-471 / A3(2) / M145).